A 387-amino-acid polypeptide reads, in one-letter code: Methyltransferase phomM' (387 aa).

The tract at residues 98 to 223 is methyltransferase domain; sequence PHRPKDLHIL…QSVADLFTTL (126 aa).

Belongs to the class I-like SAM-binding methyltransferase superfamily. Erg6/SMT family.

It participates in mycotoxin biosynthesis. Its function is as follows. Methyltransferase; part of the gene cluster that mediates the biosynthesis of the phomopsins, a group of hexapeptide mycotoxins which infects lupins and causes lupinosis disease in livestock. Within the pathway, phomM' acts as an S-adenosylmethionine-dependent alpha-N-methyltransferase that catalyzes two successive N-methylation reactions, converting N-desmethyl-phomopsin A to phomopsin A and phomopsin A further to an N,N-dimethylated congener called phomopsin E. The pathway starts with the processing of the precursor phomA' by several endopeptidases including kexin proteases as well as the cluster-specific S41 family peptidase phomP1 and the oligopeptidase phomG' to produce 10 identical copies of the hexapeptide Tyr-Val-Ile-Pro-Ile-Asp. After being excised from the precursor peptide, the core peptides are cyclized and modified post-translationally by enzymes encoded within the gene cluster. The timing and order of proteolysis of the phomA' precursor and PTMs are still unknown. Two tyrosinase-like enzymes, phomQ1' and phomQ2, catalyze the chlorination and hydroxylation of Tyr, respectively. PhomYb, is proposed to be involved in the construction of the macrocyclic structure. The other 4 ustYa family proteins may be involved in PTMs that generate the unique structure of phomopsin A. PhomYa' is required for the hydroxylation of C-beta of Tyr. PhomYc', phomYd', and phomYe are responsible for the biosynthesis of 2,3-dehydroisoleucine (dIle), 2,3-dehydroaspartic acid (dAsp), and 3,4-dehydroproline (dPro), respectively. While dIle formation by phomYc' is indispensable for the installation of dAsp by phomYd', the order of the other PTMs have not been elucidated yet. Most of the biosynthetic enzymes likely have broad substrate specificity, and thus, there might be a metabolic grid from a precursor to phomopsin A. The enzyme(s) responsible for the biosynthesis of 3,4-dehydrovaline (dVal) have also not been identified yet. Finally, phomM' acts as an S-adenosylmethionine-dependent alpha-N-methyltransferase that catalyzes two successive N-methylation reactions, converting N-desmethyl-phomopsin A to phomopsin A and phomopsin A further to an N,N-dimethylated congener called phomopsin E. In Diaporthe leptostromiformis (Lupinosis disease fungus), this protein is Methyltransferase phomM'.